The chain runs to 737 residues: Alpha-adducin (737 aa).

Residue Met-1 is modified to N-acetylmethionine. Residues 1–21 (MNGDSRAAVVTSPPPTTAPHK) are disordered. Ser-12 carries the phosphoserine modification. Ser-59 is modified (phosphoserine; by PKA). Ser-64 carries the phosphoserine modification. The residue at position 331 (Thr-331) is a Phosphothreonine. A phosphoserine mark is found at Ser-334, Ser-353, Ser-355, Ser-358, and Ser-366. At Ser-408 the chain carries Phosphoserine; by PKA. Positions 419-430 (YSFTSDGDSGTC) are enriched in polar residues. Disordered regions lie at residues 419-490 (YSFT…NLFV) and 576-737 (RREV…KSES). The residue at position 427 (Ser-427) is a Phosphoserine. A Phosphothreonine modification is found at Thr-429. Ser-431 is modified (phosphoserine). Ser-436 is modified (phosphoserine; by PKA). Position 445 is a phosphothreonine; by ROCK2 (Thr-445). Phosphoserine is present on residues Ser-464 and Ser-465. Thr-480 is subject to Phosphothreonine; by ROCK2. Ser-481 is modified (phosphoserine; by PKA). A compositionally biased stretch (basic and acidic residues) spans 576 to 601 (RREVERKQKGSEENLDEAREQKEKSP). 3 positions are modified to phosphoserine: Ser-586, Ser-600, and Ser-613. Residues 602 to 614 (PDQPAVPYPPPST) are compositionally biased toward pro residues. Thr-614 bears the Phosphothreonine mark. Residues Ser-678, Ser-707, Ser-710, and Ser-714 each carry the phosphoserine modification. A compositionally biased stretch (low complexity) spans 687–714 (PVAEEAAPSAAEEGAAADPGSDGSPGKS). A compositionally biased stretch (basic residues) spans 715–737 (PSKKKKKFRTPSFLKKSKKKSES). A Phosphoserine; by PKC modification is found at Ser-716. An interaction with calmodulin region spans residues 717–734 (KKKKKFRTPSFLKKSKKK). Residue Ser-726 is modified to Phosphoserine; by PKA and PKC.

Belongs to the aldolase class II family. Adducin subfamily. In terms of assembly, heterodimer of an alpha and a beta subunit or an alpha and a gamma subunit.

It localises to the cytoplasm. The protein localises to the cytoskeleton. The protein resides in the cell membrane. Membrane-cytoskeleton-associated protein that promotes the assembly of the spectrin-actin network. Binds to calmodulin. This chain is Alpha-adducin (ADD1), found in Pongo abelii (Sumatran orangutan).